The primary structure comprises 479 residues: Monodictyphenone cluster transcriptional coactivator mdpA (479 aa).

Residues 77–147 enclose the HTH iclR-type domain; that stretch reads LAVQNQLLAC…DPGQVAHSAL (71 aa). The segment at residues 107 to 126 is a DNA-binding region (H-T-H motif); that stretch reads IKDVAELAGVPETHLSRIIR. Disordered regions lie at residues 281-305 and 314-333; these read GPTA…HKHD and TAST…TTNS. A compositionally biased stretch (pro residues) spans 289 to 298; it reads HPNPIRPPTP. The segment covering 314-323 has biased composition (low complexity); the sequence is TASTTPASSH.

The protein resides in the nucleus. Functionally, transcriptional coactivator; part of the gene cluster that mediates the biosynthesis of monodictyphenone, a prenyl xanthone derivative. With mdpE, coregulates the production of monodictyphenone. The polypeptide is Monodictyphenone cluster transcriptional coactivator mdpA (Emericella nidulans (strain FGSC A4 / ATCC 38163 / CBS 112.46 / NRRL 194 / M139) (Aspergillus nidulans)).